A 244-amino-acid chain; its full sequence is Isoprenyl transferase (244 aa).

The active site involves Asp20. Asp20 is a binding site for Mg(2+). Substrate is bound by residues 21–24 (GNGR), Trp25, Arg33, His37, and 65–67 (SSE). Residue Asn68 is the Proton acceptor of the active site. Substrate-binding positions include Trp69, Arg71, Arg188, and 194 to 196 (RIS). Glu207 is a binding site for Mg(2+).

Belongs to the UPP synthase family. As to quaternary structure, homodimer. Requires Mg(2+) as cofactor.

Functionally, catalyzes the condensation of isopentenyl diphosphate (IPP) with allylic pyrophosphates generating different type of terpenoids. This Rhodopirellula baltica (strain DSM 10527 / NCIMB 13988 / SH1) protein is Isoprenyl transferase.